A 423-amino-acid polypeptide reads, in one-letter code: UDP-N-acetylglucosamine 1-carboxyvinyltransferase 1 (423 aa).

23 to 24 contacts phosphoenolpyruvate; it reads KN. A UDP-N-acetyl-alpha-D-glucosamine-binding site is contributed by R96. Residue C120 is the Proton donor of the active site. A 2-(S-cysteinyl)pyruvic acid O-phosphothioketal modification is found at C120. UDP-N-acetyl-alpha-D-glucosamine contacts are provided by D309 and V331.

Belongs to the EPSP synthase family. MurA subfamily.

Its subcellular location is the cytoplasm. The enzyme catalyses phosphoenolpyruvate + UDP-N-acetyl-alpha-D-glucosamine = UDP-N-acetyl-3-O-(1-carboxyvinyl)-alpha-D-glucosamine + phosphate. It participates in cell wall biogenesis; peptidoglycan biosynthesis. Cell wall formation. Adds enolpyruvyl to UDP-N-acetylglucosamine. In Streptococcus pyogenes serotype M3 (strain ATCC BAA-595 / MGAS315), this protein is UDP-N-acetylglucosamine 1-carboxyvinyltransferase 1.